The chain runs to 513 residues: Cyclin-dependent kinase C-2 (513 aa).

Residues 26-325 enclose the Protein kinase domain; sequence FEKLEQIGEG…AKDALDAEYF (300 aa). ATP contacts are provided by residues 32–40 and Lys-55; that span reads IGEGTYGQV. Tyr-37 carries the phosphotyrosine modification. Catalysis depends on Asp-164, which acts as the Proton acceptor. A Phosphothreonine modification is found at Thr-198. The interval 337 to 513 is disordered; that stretch reads LPTYESSHEF…ARNQQYGWQP (177 aa). Over residues 395–404 the composition is skewed to low complexity; the sequence is AGPNHPMNNN. The segment covering 434 to 448 has biased composition (polar residues); sequence SGNQTGGYNNQSRGG. Composition is skewed to gly residues over residues 461-476 and 483-496; these read APYG…GYGV and QGGG…GSGR.

This sequence belongs to the protein kinase superfamily. CMGC Ser/Thr protein kinase family. CDC2/CDKX subfamily. Interacts with CYCT1-3. In terms of tissue distribution, highly expressed in flowers. Expressed in seedlings, roots, rosettes and stems.

It carries out the reaction L-seryl-[protein] + ATP = O-phospho-L-seryl-[protein] + ADP + H(+). The catalysed reaction is L-threonyl-[protein] + ATP = O-phospho-L-threonyl-[protein] + ADP + H(+). The enzyme catalyses [DNA-directed RNA polymerase] + ATP = phospho-[DNA-directed RNA polymerase] + ADP + H(+). The sequence is that of Cyclin-dependent kinase C-2 (CDKC-2) from Arabidopsis thaliana (Mouse-ear cress).